Here is a 112-residue protein sequence, read N- to C-terminus: Prothymosin alpha (112 aa).

Met-1 carries the N-acetylmethionine modification. The segment at 1–112 (MSDAAVDTSS…KKQKKTDEDD (112 aa)) is disordered. Ser-2 is subject to N-acetylserine; in Prothymosin alpha, N-terminally processed. Ser-2 bears the Phosphoserine mark. Phosphothreonine is present on Thr-8. Phosphoserine occurs at positions 9 and 10. 2 positions are modified to phosphothreonine: Thr-13 and Thr-14. Basic and acidic residues predominate over residues 13 to 31 (TTKDLKEKKEVVEEAENGR). Residue Lys-15 is modified to N6-acetyllysine; alternate. N6-succinyllysine; alternate is present on Lys-15. The span at 43–84 (ENGEQEADNEVDEEEEEGGEEEEEEEEGDGEEEDGDEDEEAE) shows a compositional bias: acidic residues. The span at 101–112 (ETKKQKKTDEDD) shows a compositional bias: basic and acidic residues. Thr-102 carries the phosphothreonine modification. Residue Lys-103 is modified to N6-acetyllysine; alternate. Lys-103 participates in a covalent cross-link: Glycyl lysine isopeptide (Lys-Gly) (interchain with G-Cter in SUMO2); alternate. At Thr-108 the chain carries Phosphothreonine.

It belongs to the pro/parathymosin family. As to quaternary structure, interacts with NUPR1; regulates apoptotic process. Post-translationally, covalently linked to a small RNA of about 20 nucleotides.

The protein localises to the nucleus. Prothymosin alpha may mediate immune function by conferring resistance to certain opportunistic infections. The protein is Prothymosin alpha (Ptma) of Rattus norvegicus (Rat).